Reading from the N-terminus, the 820-residue chain is Cell division control protein 48 homolog C (820 aa).

Disordered regions lie at residues 72–157 and 169–188; these read RVKD…RFDL and LNSS…VEVE. Positions 76 to 87 are enriched in acidic residues; the sequence is EDEDDNIGDEEG. Residues 85–122 adopt a coiled-coil conformation; sequence EEGSASQRKKQRRVDEKEEKLQRAEQSHLRKRNMERSV. Residues 97 to 119 show a composition bias toward basic and acidic residues; the sequence is RVDEKEEKLQRAEQSHLRKRNME. A compositionally biased stretch (low complexity) spans 121–142; that stretch reads SVSSSPSSSSSSEDSGDVSTSE. ATP is bound by residues 274–281 and 569–576; these read GPPGCGKT.

The protein belongs to the AAA ATPase family.

The protein localises to the nucleus. It localises to the cytoplasm. The protein resides in the cytoskeleton. Its subcellular location is the phragmoplast. Functionally, probably functions in cell division and growth processes. Interacts with certain SNAREs as part of specialized membrane fusion events where vesicles from the same organelle fuse (homotypic fusion). The protein is Cell division control protein 48 homolog C (CDC48C) of Arabidopsis thaliana (Mouse-ear cress).